Here is a 294-residue protein sequence, read N- to C-terminus: Thymidylate synthase (294 aa).

DUMP-binding positions include arginine 30 and 156 to 157; that span reads RR. Catalysis depends on cysteine 176, which acts as the Nucleophile. DUMP is bound by residues 196–199, asparagine 207, and 237–239; these read RSGD and HVY. Position 199 (aspartate 199) interacts with (6R)-5,10-methylene-5,6,7,8-tetrahydrofolate. Alanine 293 provides a ligand contact to (6R)-5,10-methylene-5,6,7,8-tetrahydrofolate.

The protein belongs to the thymidylate synthase family. Homodimer.

The enzyme catalyses dUMP + (6R)-5,10-methylene-5,6,7,8-tetrahydrofolate = 7,8-dihydrofolate + dTMP. It participates in pyrimidine metabolism; dTTP biosynthesis. This chain is Thymidylate synthase, found in Ascaris suum (Pig roundworm).